A 62-amino-acid polypeptide reads, in one-letter code: MSIILQILVVALIVYSFVLIVAVPITLSTASGWSKSKSSIVTASIGWVGMVLLTGVLNSFVS.

Helical transmembrane passes span 8–28 and 41–61; these read LVVALIVYSFVLIVAVPITLS and VTASIGWVGMVLLTGVLNSFV.

The protein belongs to the PsbZ family. As to quaternary structure, PSII is composed of 1 copy each of membrane proteins PsbA, PsbB, PsbC, PsbD, PsbE, PsbF, PsbH, PsbI, PsbJ, PsbK, PsbL, PsbM, PsbT, PsbX, PsbY, PsbZ, Psb30/Ycf12, at least 3 peripheral proteins of the oxygen-evolving complex and a large number of cofactors. It forms dimeric complexes.

It localises to the plastid. It is found in the chloroplast thylakoid membrane. Its function is as follows. May control the interaction of photosystem II (PSII) cores with the light-harvesting antenna, regulates electron flow through the 2 photosystem reaction centers. PSII is a light-driven water plastoquinone oxidoreductase, using light energy to abstract electrons from H(2)O, generating a proton gradient subsequently used for ATP formation. In Cyanidioschyzon merolae (strain NIES-3377 / 10D) (Unicellular red alga), this protein is Photosystem II reaction center protein Z.